The primary structure comprises 140 residues: Nucleoside diphosphate kinase (140 aa).

ATP-binding residues include K11, F59, R87, T93, R104, and N114. The active-site Pros-phosphohistidine intermediate is H117.

This sequence belongs to the NDK family. In terms of assembly, homotetramer. It depends on Mg(2+) as a cofactor.

It localises to the cytoplasm. It carries out the reaction a 2'-deoxyribonucleoside 5'-diphosphate + ATP = a 2'-deoxyribonucleoside 5'-triphosphate + ADP. The enzyme catalyses a ribonucleoside 5'-diphosphate + ATP = a ribonucleoside 5'-triphosphate + ADP. Its function is as follows. Major role in the synthesis of nucleoside triphosphates other than ATP. The ATP gamma phosphate is transferred to the NDP beta phosphate via a ping-pong mechanism, using a phosphorylated active-site intermediate. The protein is Nucleoside diphosphate kinase of Brucella anthropi (strain ATCC 49188 / DSM 6882 / CCUG 24695 / JCM 21032 / LMG 3331 / NBRC 15819 / NCTC 12168 / Alc 37) (Ochrobactrum anthropi).